A 1153-amino-acid chain; its full sequence is MTLKALLVTALALCHGFNLDTEHPMTFQENAKGFGQNVVQLGGTSVVVAAPQEAKAVNQTGALYQCDYSTSRCHPIPLQVPPEAVNMSLGLSLAVSTVPQQLLACGPTVHQNCKENTYVNGLCYLFGSNLLRPPQQFPEALRECPQQESDIVFLIDGSGSINNIDFQKMKEFVSTVMEQFKKSKTLFSLMQYSDEFRIHFTFNDFKRNPSPRSHVSPIKQLNGRTKTASGIRKVVRELFHKTNGARENAAKILVVITDGEKFGDPLDYKDVIPEADRAGVIRYVIGVGNAFNKPQSRRELDTIASKPAGEHVFQVDNFEALNTIQNQLQEKIFAIEGTQTGSTSSFEHEMSQEGFSASITSNGPLLGSVGSFDWAGGAFLYTSKDKVTFINTTRVDSDMNDAYLGYASAVILRNRVQSLVLGAPRYQHIGLVVMFRENFGTWEPHTSIKGSQIGSYFGASLCSVDMDADGNTNLILIGAPHYYEKTRGGQVSVCPLPRGRARWQCEALLHGDQGHPWGRFGAALTVLGDVNGDKLTDVAIGAPGEQENQGAVYIFYGASIASLSASHSHRIIGAHFSPGLQYFGQSLSGGKDLTMDGLMDLAVGAQGHLLLLRAQPVLRLEATMEFSPKKVARSVFACQEQVLKNKDAGEVRVCLRVRKNTKDRLREGDIQSTVTYDLALDPVRSRIRAFFDETKNNTRRRTQVFGLMQKCETLKLILPDCVDDSVSPIILRLNYTLVGEPLRSFGNLRPVLAMDAQRFFTAMFPFEKNCGNDSICQDDLSITMSAMGLDTLVVGGPQDFNMSVTLRNDGEDSYGTQVTVYYPSGLSYRKDSASQNPLTKKPWFVKPAESSSSSEGHGALKSTTWNINHPIFPANSEVTFNVTFDVDSHASFGNKLLLKAIVASENNMSRTHKTKFQLELPVKYAIYMIVTSDESSIRYLNFTASEMTSKVIQHQYQFNNLGQRSLPVSVVFWIPVQINNVTVWDHPQVIFSQNLSSACHTEQKSPPHSNFRDQLERTPVLNCSVAVCKRIQCDLPSFNTQEIFNVTLKGNLSFDWYIKTSHGHLLLVSSTEILFNDSAFALLPGQESYVRSKTETKVEPYEVHNPVPLIVGSSIGGLVLLALITAGLYKLGFFKRQYKDMMNEAAPQDAPPQ.

The N-terminal stretch at 1-16 (MTLKALLVTALALCHG) is a signal peptide. Topologically, residues 17–1105 (FNLDTEHPMT…TKVEPYEVHN (1089 aa)) are extracellular. FG-GAP repeat units lie at residues 18–75 (NLDT…RCHP) and 76–135 (IPLQ…RPPQ). The N-linked (GlcNAc...) asparagine glycan is linked to N58. A disulfide bridge connects residues C66 and C73. Residue N86 is glycosylated (N-linked (GlcNAc...) asparagine). The cysteines at positions 105 and 123 are disulfide-linked. The VWFA domain maps to 164–338 (IDFQKMKEFV…QEKIFAIEGT (175 aa)). 5 FG-GAP repeats span residues 339 to 390 (QTGS…VTFI), 391 to 442 (NTTR…FGTW), 443 to 503 (EPHT…RARW), 506 to 564 (EALL…ASLS), and 569 to 629 (HRII…FSPK). Residue N391 is glycosylated (N-linked (GlcNAc...) asparagine). 12 residues coordinate Ca(2+): D465, D467, D469, N471, N473, D529, N531, D533, D537, D592, D596, and D600. The cysteines at positions 654 and 711 are disulfide-linked. N696, N734, N772, N801, N881, N907, N941, N980, N994, and N1022 each carry an N-linked (GlcNAc...) asparagine glycan. C770 and C776 are disulfide-bonded. Intrachain disulfides connect C999/C1023 and C1028/C1033. Residues N1045, N1051, and N1076 are each glycosylated (N-linked (GlcNAc...) asparagine). The helical transmembrane segment at 1106–1129 (PVPLIVGSSIGGLVLLALITAGLY) threads the bilayer. Over 1130–1153 (KLGFFKRQYKDMMNEAAPQDAPPQ) the chain is Cytoplasmic. Positions 1132–1136 (GFFKR) match the GFFKR motif motif.

It belongs to the integrin alpha chain family. In terms of assembly, heterodimer of an alpha and a beta subunit. ITGAM associates with ITGB2. Found in a complex with CD177 and ITGB2/CD18. Interacts with JAM3. Interacts with THBD. Interacts with complement factor H/CFH; this interaction mediates adhesion of neutrophils to pathogens leading to pathogen clearance. Interacts with TMEM268; this interaction inhibits ITGAM degradation via the endosome-lysosome pathway. As to expression, predominantly expressed in monocytes and granulocytes. Expressed in a subset of peritoneal mast cells. Expressed in microglia (at protein level).

It is found in the cell membrane. It localises to the membrane raft. In terms of biological role, integrin ITGAM/ITGB2 is implicated in various adhesive interactions of monocytes, macrophages and granulocytes as well as in mediating the uptake of complement-coated particles and pathogens. It is identical with CR-3, the receptor for the iC3b fragment of the third complement component. It probably recognizes the R-G-D peptide in C3b. Integrin ITGAM/ITGB2 is also a receptor for fibrinogen, factor X and ICAM1. It recognizes P1 and P2 peptides of fibrinogen gamma chain. Regulates neutrophil migration. In association with beta subunit ITGB2/CD18, required for CD177-PRTN3-mediated activation of TNF primed neutrophils. May regulate phagocytosis-induced apoptosis in extravasated neutrophils. May play a role in mast cell development. Required with TYROBP/DAP12 in microglia to control production of microglial superoxide ions which promote the neuronal apoptosis that occurs during brain development. In Mus musculus (Mouse), this protein is Integrin alpha-M (Itgam).